The primary structure comprises 1123 residues: MSTSRPSQSSSNSGRSRRSARAMALATVDAKLHATFEESGSSFDYSSSVRISGTADGVNQPRHDKVTTAYLHHMQKGKMIQPFGCLLALDEKTCKVIAYSENAPEMLTMVSHAVPSVGDHPALGIGTDIKTLFTAPSASALQKALGFAEVLLLNPVLIHCKTSGKPFYAIIHRVTGSMIIDFEPVKPYEVPMTAAGALQSYKLAAKAITRLQSLPSGSMERLCDTMVQEVFELTGYDRVMAYKFHEDDHGEVIAEITKPGLEPYLGLHYPATDIPQASRFLFMKNKVRMIVDCHAKHVRVLQDEKLPFDLTLCGSTLRAPHSCHAQYMANMDSIASLVMAVVVNDNEEDGDTDAIQPQKRKRLWGLVVCHNTTPRFVPFPLRYACEFLAQVFAIHVNKEIELEYQIIEKNILRTQTLLCDLVMRDAPLGIVSESPNIMDLVKCDGAALIYKNKVWRLGVTPSESQIREIAFWLSEYHMDSTGFSTDSLSDAGFPSALSLGDVVCGMAAVRVTAKDVVFWFRSHTAAEIRWGGAKHEAGEKDDGRRMHPRSSFKVFLDVVKARSLPWKEYEIDAMHSLQLILRNAFKDTESMDLNTKAINTRLSDLKIEGMQELEAVTSEIVRLIETATVPILAVDVDGLVNGWNIKIAELTGLPVGEAMGKHLLTLVEDSSTDRVKKMLNLALLGEEEKNVQFEIKTHGSKMDSGPISLVVNACASRDLRDNVVGVCFVAHDITAQKNVMDKFTRIEGDYKAIVQNRNPLIPPIFGTDEFGWCCEWNPAMTKLTGWKREEVMDKMLLGELFGTHMAACRLKNQEAFVNLGVVLNKAMTGLETEKVPFGFFARNGKYVECLLSVSKKLDVEGLVTGVFCFLQLASPELQQALHIQRLSEQTALKRLNALSYMKRQIRNPLCGIIFSRKMLEGTALGTEQKQLLRTSAQCQQQLSKILDDSDLDSIIDGYLDLEMAEFTLHEVLVTSLSQVMTKSNGKSIRIVNDVAEQIVMETLYGDSLRLQQVLADFLLISINFTPNGGQVVVAGTLTKEQLGKSVHLVKLELSITHGGSGVPEALLNQMFGNNGLESEEGISLLISRKLLKLMNGDVRYLREAGKSAFILSAELAAAHNLKG.

Low complexity predominate over residues 1-14 (MSTSRPSQSSSNSG). Positions 1–21 (MSTSRPSQSSSNSGRSRRSAR) are disordered. The GAF domain maps to 267 to 449 (LHYPATDIPQ…LVKCDGAALI (183 aa)). Cys-323 serves as a coordination point for phytochromobilin. The 71-residue stretch at 616 to 686 (VTSEIVRLIE…KMLNLALLGE (71 aa)) folds into the PAS 1 domain. The 57-residue stretch at 689–745 (KNVQFEIKTHGSKMDSGPISLVVNACASRDLRDNVVGVCFVAHDITAQKNVMDKFTR) folds into the PAC domain. The PAS 2 domain maps to 749–823 (DYKAIVQNRN…EAFVNLGVVL (75 aa)). Residues 900-1119 (YMKRQIRNPL…ILSAELAAAH (220 aa)) enclose the Histidine kinase domain.

It belongs to the phytochrome family. In terms of assembly, heterodimer between subunit A and subunit B. In terms of processing, contains one covalently linked phytochromobilin chromophore.

Functionally, regulatory photoreceptor which exists in two forms that are reversibly interconvertible by light: the Pr form that absorbs maximally in the red region of the spectrum and the Pfr form that absorbs maximally in the far-red region. Photoconversion of Pr to Pfr induces an array of morphogenic responses, whereas reconversion of Pfr to Pr cancels the induction of those responses. Pfr controls the expression of a number of nuclear genes including those encoding the small subunit of ribulose-bisphosphate carboxylase, chlorophyll A/B binding protein, protochlorophyllide reductase, rRNA, etc. It also controls the expression of its own gene(s) in a negative feedback fashion. This chain is Phytochrome A-2, found in Glycine max (Soybean).